The primary structure comprises 450 residues: Tubulin alpha chain (450 aa).

Gln11 contributes to the GTP binding site. Lys40 is subject to N6-acetyllysine. GTP is bound by residues Glu71, Ser140, Gly144, Thr145, Thr179, Asn206, and Asn228. Glu71 contacts Mg(2+). Glu254 is a catalytic residue.

This sequence belongs to the tubulin family. In terms of assembly, dimer of alpha and beta chains. A typical microtubule is a hollow water-filled tube with an outer diameter of 25 nm and an inner diameter of 15 nM. Alpha-beta heterodimers associate head-to-tail to form protofilaments running lengthwise along the microtubule wall with the beta-tubulin subunit facing the microtubule plus end conferring a structural polarity. Microtubules usually have 13 protofilaments but different protofilament numbers can be found in some organisms and specialized cells. The cofactor is Mg(2+). Post-translationally, acetylation of alpha chains at Lys-40 stabilizes microtubules and affects affinity and processivity of microtubule motors. This modification has a role in multiple cellular functions, ranging from cell motility, cell cycle progression or cell differentiation to intracellular trafficking and signaling.

The protein localises to the cytoplasm. The protein resides in the cytoskeleton. It catalyses the reaction GTP + H2O = GDP + phosphate + H(+). Tubulin is the major constituent of microtubules, a cylinder consisting of laterally associated linear protofilaments composed of alpha- and beta-tubulin heterodimers. Microtubules grow by the addition of GTP-tubulin dimers to the microtubule end, where a stabilizing cap forms. Below the cap, tubulin dimers are in GDP-bound state, owing to GTPase activity of alpha-tubulin. In Euplotoides octocarinatus (Freshwater ciliate), this protein is Tubulin alpha chain.